The following is a 470-amino-acid chain: Neuraminidase (470 aa).

Residues 1–6 lie on the Intravirion side of the membrane; it reads MNPNQK. The chain crosses the membrane as a helical span at residues 7-27; that stretch reads IITIGSICMAIGIISLILQIG. The interval 11–33 is involved in apical transport and lipid raft association; that stretch reads GSICMAIGIISLILQIGNIISIW. Over 28–470 the chain is Virion surface; that stretch reads NIISIWVSHS…GAELPFTIDK (443 aa). The segment at 36–90 is hypervariable stalk region; it reads HSIQTGSQNHTGICNQRIITYENSTWVNQTYVNISNTNVVAGKDTTSMTLAGNSS. N-linked (GlcNAc...) asparagine; by host glycans are attached at residues N44, N58, N63, N68, and N88. The tract at residues 91–470 is head of neuraminidase; the sequence is LCPIRGWAIY…GAELPFTIDK (380 aa). Cystine bridges form between C92–C417, C124–C129, C184–C231, C233–C238, C279–C292, C281–C290, C318–C335, and C421–C447. Position 118 (R118) interacts with substrate. A glycan (N-linked (GlcNAc...) asparagine; by host) is linked at N146. The Proton donor/acceptor role is filled by D151. Residue R152 coordinates substrate. N-linked (GlcNAc...) asparagine; by host glycosylation is present at N235. 277–278 provides a ligand contact to substrate; sequence EE. An N-linked (GlcNAc...) asparagine; by host glycan is attached at N285. Residue R293 participates in substrate binding. Ca(2+)-binding residues include D294, G298, and D324. N-linked (GlcNAc...) asparagine; by host glycosylation is present at N365. R368 provides a ligand contact to substrate. The Nucleophile role is filled by Y402. The N-linked (GlcNAc...) asparagine; by host glycan is linked to N455.

Belongs to the glycosyl hydrolase 34 family. As to quaternary structure, homotetramer. Ca(2+) serves as cofactor. N-glycosylated.

The protein resides in the virion membrane. Its subcellular location is the host apical cell membrane. The catalysed reaction is Hydrolysis of alpha-(2-&gt;3)-, alpha-(2-&gt;6)-, alpha-(2-&gt;8)- glycosidic linkages of terminal sialic acid residues in oligosaccharides, glycoproteins, glycolipids, colominic acid and synthetic substrates.. Inhibited by the neuraminidase inhibitors zanamivir (Relenza) and oseltamivir (Tamiflu). These drugs interfere with the release of progeny virus from infected cells and are effective against all influenza strains. Resistance to neuraminidase inhibitors is quite rare. Functionally, catalyzes the removal of terminal sialic acid residues from viral and cellular glycoconjugates. Cleaves off the terminal sialic acids on the glycosylated HA during virus budding to facilitate virus release. Additionally helps virus spread through the circulation by further removing sialic acids from the cell surface. These cleavages prevent self-aggregation and ensure the efficient spread of the progeny virus from cell to cell. Otherwise, infection would be limited to one round of replication. Described as a receptor-destroying enzyme because it cleaves a terminal sialic acid from the cellular receptors. May facilitate viral invasion of the upper airways by cleaving the sialic acid moieties on the mucin of the airway epithelial cells. Likely to plays a role in the budding process through its association with lipid rafts during intracellular transport. May additionally display a raft-association independent effect on budding. Plays a role in the determination of host range restriction on replication and virulence. Sialidase activity in late endosome/lysosome traffic seems to enhance virus replication. This Influenza A virus (strain A/Kiev/59/1979 H1N1) protein is Neuraminidase.